The primary structure comprises 156 residues: Cyanate hydratase (156 aa).

Active-site residues include Arg-96, Glu-99, and Ser-122.

It belongs to the cyanase family.

It catalyses the reaction cyanate + hydrogencarbonate + 3 H(+) = NH4(+) + 2 CO2. Its function is as follows. Catalyzes the reaction of cyanate with bicarbonate to produce ammonia and carbon dioxide. In Serratia proteamaculans (strain 568), this protein is Cyanate hydratase.